The sequence spans 59 residues: Large ribosomal subunit protein bL32c (59 aa).

The segment at 37-59 (SRSFSSGNEHPKPKGFSGQQANK) is disordered.

It belongs to the bacterial ribosomal protein bL32 family.

Its subcellular location is the plastid. The protein resides in the chloroplast. The polypeptide is Large ribosomal subunit protein bL32c (Saccharum hybrid (Sugarcane)).